A 391-amino-acid polypeptide reads, in one-letter code: Na(+)/H(+) antiporter NhaA (391 aa).

The next 11 helical transmembrane spans lie at 14 to 34 (GGII…LGAT), 59 to 79 (MLLW…GLEV), 95 to 115 (AFPV…YLAF), 125 to 145 (GWAI…ALLG), 154 to 174 (IFLM…IALF), 180 to 200 (SILS…LNIF), 219 to 239 (VLKS…FIPL), 254 to 274 (VLHP…NAGV), 292 to 312 (IIAG…WLAL), 328 to 348 (IMAV…ISTL), and 357 to 377 (LIVW…FVGY).

It belongs to the NhaA Na(+)/H(+) (TC 2.A.33) antiporter family.

The protein resides in the cell inner membrane. It carries out the reaction Na(+)(in) + 2 H(+)(out) = Na(+)(out) + 2 H(+)(in). Functionally, na(+)/H(+) antiporter that extrudes sodium in exchange for external protons. In Enterobacter sp. (strain 638), this protein is Na(+)/H(+) antiporter NhaA.